The chain runs to 384 residues: Lipid-A-disaccharide synthase 1 (384 aa).

It belongs to the LpxB family.

It catalyses the reaction a lipid X + a UDP-2-N,3-O-bis[(3R)-3-hydroxyacyl]-alpha-D-glucosamine = a lipid A disaccharide + UDP + H(+). Its pathway is bacterial outer membrane biogenesis; LPS lipid A biosynthesis. In terms of biological role, condensation of UDP-2,3-diacylglucosamine and 2,3-diacylglucosamine-1-phosphate to form lipid A disaccharide, a precursor of lipid A, a phosphorylated glycolipid that anchors the lipopolysaccharide to the outer membrane of the cell. In Legionella pneumophila subsp. pneumophila (strain Philadelphia 1 / ATCC 33152 / DSM 7513), this protein is Lipid-A-disaccharide synthase 1.